An 89-amino-acid chain; its full sequence is Small ribosomal subunit protein uS19 (89 aa).

This sequence belongs to the universal ribosomal protein uS19 family.

Protein S19 forms a complex with S13 that binds strongly to the 16S ribosomal RNA. In Porphyromonas gingivalis (strain ATCC 33277 / DSM 20709 / CIP 103683 / JCM 12257 / NCTC 11834 / 2561), this protein is Small ribosomal subunit protein uS19.